A 966-amino-acid polypeptide reads, in one-letter code: Phosphoenolpyruvate carboxylase (966 aa).

Phosphoserine is present on Ser-10. Residues His-171 and Lys-601 contribute to the active site.

This sequence belongs to the PEPCase type 1 family. Homotetramer. Requires Mg(2+) as cofactor.

The protein resides in the cytoplasm. The catalysed reaction is oxaloacetate + phosphate = phosphoenolpyruvate + hydrogencarbonate. By light-reversible phosphorylation. In terms of biological role, through the carboxylation of phosphoenolpyruvate (PEP) it forms oxaloacetate, a four-carbon dicarboxylic acid source for the tricarboxylic acid cycle. In Medicago sativa (Alfalfa), this protein is Phosphoenolpyruvate carboxylase (PEPC).